Here is a 389-residue protein sequence, read N- to C-terminus: Gustatory receptor 68a (389 aa).

Residues 1–42 (MKIYQDIYPISKPSQIFAILPFYSGDVDDGFRFGGLGRWYGR) lie on the Cytoplasmic side of the membrane. Residues 43-63 (LVALIILIGSLTLGEDVLFAS) traverse the membrane as a helical segment. At 64 to 82 (KEYRLVASAQGDTEEINRT) the chain is on the extracellular side. N80 carries N-linked (GlcNAc...) asparagine glycosylation. The helical transmembrane segment at 83–103 (IETLLCIISYTMVVLSSVQNA) threads the bilayer. Residues 104-133 (SRHFRTLHDIAKIDEYLLANGFRETYSCRN) lie on the Cytoplasmic side of the membrane. The helical transmembrane segment at 134–154 (LTILVTSAAGGVLAVAFYYIH) threads the bilayer. Residues 155–164 (YRSGIGAKRQ) are Extracellular-facing. A helical transmembrane segment spans residues 165–185 (IILLLIYFLQLLYSTLLALYL). The Cytoplasmic portion of the chain corresponds to 186–236 (RTLMMNLAQRIGFLNQKLDTFNLQDCGHMENWRELSNLIEVLCKFRYITEN). A helical transmembrane segment spans residues 237-257 (INCVAGVSLLFYFGFSFYTVT). N258 is a glycosylation site (N-linked (GlcNAc...) asparagine). At 258–281 (NQSYLAFATLTAGSLSSKTEVADT) the chain is on the extracellular side. A helical membrane pass occupies residues 282-302 (IGLSCIWVLAETITMIVICSA). Residues 303–352 (CDGLASEVNGTAQILARIYGKSKQFQNLIDKFLTKSIKQDLQFTAYGFFS) are Cytoplasmic-facing. Residues 353-373 (IDNSTLFKIFSAVTTYLVILI) traverse the membrane as a helical segment. At 374–389 (QFKQLEDSKVEDISQA) the chain is on the extracellular side.

This sequence belongs to the insect chemoreceptor superfamily. Gustatory receptor (GR) family. Gr21a subfamily. As to expression, expressed in chemosensory neurons of about 20 male-specific gustatory bristles in the forelegs. No expression is seen in the mechanosensory neurons. In larvae, expressed in the ventral pharyngeal sense organ.

The protein localises to the cell membrane. Dsx-dependent essential component of pheromone-driven courtship behavior. Recognizes a female pheromone involved in the second step (tapping step) of the courtship display which is essential for efficient execution of the entire courtship sequence and timely mating. Required for detection of the male sex pheromone CH503 which is transferred from males to females during mating and inhibits courtship behavior by other males. Gr68a-expressing neurons in the male foreleg relay signals to the suboesophageal zone (SEZ) and courtship suppression is mediated by the release of the neuropeptide tachykinin from a cluster of 8-10 neurons in the SEZ. The polypeptide is Gustatory receptor 68a (Gr68a) (Drosophila melanogaster (Fruit fly)).